Consider the following 334-residue polypeptide: Glutaredoxin-3 (334 aa).

Alanine 2 is subject to N-acetylalanine. The region spanning 2–116 (AGGAAEAAAA…LTKKVQRHAS (115 aa)) is the Thioredoxin domain. The segment at 110-131 (KVQRHASSGSFSPSGSEHPKED) is disordered. Serine 116 and serine 119 each carry phosphoserine. A compositionally biased stretch (low complexity) spans 116–125 (SSGSFSPSGS). 2 consecutive Glutaredoxin domains span residues 145 to 235 (CMLF…PKLE) and 236 to 334 (ERLK…KGEN). Cysteine 158 and cysteine 260 together coordinate [2Fe-2S] cluster.

In terms of assembly, homodimer; the homodimer is independent of 2Fe-2S clusters. Heterotrimer; forms a heterotrimeric complex composed by two BOLA2 molecules and one GLRX3 molecule; linked by [2Fe-2S] clusters. Interacts (via N-terminus) with PRKCQ/PKC-theta. Interacts (via C-terminus) with CSRP3. Interacts with CSRP2.

The protein localises to the cytoplasm. It is found in the cytosol. The protein resides in the cell cortex. Its subcellular location is the myofibril. It localises to the sarcomere. The protein localises to the z line. In terms of biological role, together with BOLA2, acts as a cytosolic iron-sulfur (Fe-S) cluster assembly factor that facilitates [2Fe-2S] cluster insertion into a subset of cytosolic proteins. Acts as a critical negative regulator of cardiac hypertrophy and a positive inotropic regulator. Required for hemoglobin maturation. Does not possess any thyoredoxin activity since it lacks the conserved motif that is essential for catalytic activity. The protein is Glutaredoxin-3 (GLRX3) of Bos taurus (Bovine).